Consider the following 185-residue polypeptide: Ribosome-recycling factor (185 aa).

This sequence belongs to the RRF family.

It localises to the cytoplasm. Functionally, responsible for the release of ribosomes from messenger RNA at the termination of protein biosynthesis. May increase the efficiency of translation by recycling ribosomes from one round of translation to another. The chain is Ribosome-recycling factor from Pseudomonas putida (strain GB-1).